We begin with the raw amino-acid sequence, 861 residues long: DNA mismatch repair protein MutS (861 aa).

617-624 contributes to the ATP binding site; the sequence is GPNMGGKS. A disordered region spans residues 799-822; that stretch reads ETTSLPHEQPPAAKAKDAPQVPHQ. Positions 808–820 are enriched in low complexity; it reads PPAAKAKDAPQVP.

Belongs to the DNA mismatch repair MutS family.

This protein is involved in the repair of mismatches in DNA. It is possible that it carries out the mismatch recognition step. This protein has a weak ATPase activity. This Pseudomonas putida (strain GB-1) protein is DNA mismatch repair protein MutS.